The primary structure comprises 372 residues: Putative glutamate--cysteine ligase 2 (372 aa).

The protein belongs to the glutamate--cysteine ligase type 2 family. YbdK subfamily. As to quaternary structure, homodimer.

The catalysed reaction is L-cysteine + L-glutamate + ATP = gamma-L-glutamyl-L-cysteine + ADP + phosphate + H(+). Functionally, ATP-dependent carboxylate-amine ligase which exhibits weak glutamate--cysteine ligase activity. The protein is Putative glutamate--cysteine ligase 2 (ybdK) of Salmonella typhimurium (strain LT2 / SGSC1412 / ATCC 700720).